A 178-amino-acid polypeptide reads, in one-letter code: MKTKSPQDDRILALAEPVAAELALEVVRVRIMSGKRPRLQIMADRTNGTGIEVEDCARFSRALSEVFEVEDPVAGEYDLEVSSPGIDRPLTTLPHFERWEGNEVKIELDRLAEGRKRFRGILAGVEDGHVGLDMDGEDDTTMIPFDWIVEAKLVLTDALIEADLKARGRGAATTEGDE.

This sequence belongs to the RimP family.

The protein localises to the cytoplasm. In terms of biological role, required for maturation of 30S ribosomal subunits. This chain is Ribosome maturation factor RimP, found in Maricaulis maris (strain MCS10) (Caulobacter maris).